We begin with the raw amino-acid sequence, 1103 residues long: Ubiquitin carboxyl-terminal hydrolase 7 (1103 aa).

Low complexity predominate over residues 1–11 (MNHQQQQQQQQ). 2 disordered regions span residues 1–41 (MNHQ…TQNP) and 46–65 (NVTL…DDTS). The interaction with TSPYL5 stretch occupies residues 1–209 (MNHQQQQQQQ…APHGVAWDSK (209 aa)). Position 19 is a phosphoserine (Ser19). Positions 20–32 (EPEDMEMEAGDTD) are enriched in acidic residues. A phosphoserine mark is found at Ser50 and Ser54. Positions 54–209 (SNAEEDMEDD…APHGVAWDSK (156 aa)) are interaction with p53/TP53 and MDM2. One can recognise an MATH domain in the interval 69 to 196 (EATFQFTVER…DDKVTFEVFV (128 aa)). The segment at 71-206 (TFQFTVERFS…QADAPHGVAW (136 aa)) is necessary for nuclear localization. The USP domain maps to 215-522 (VGLKNQGATC…NAYMLVYIRE (308 aa)). The active-site Nucleophile is Cys224. His465 acts as the Proton acceptor in catalysis. Lys870 carries the post-translational modification N6-acetyllysine; alternate. Lys870 is covalently cross-linked (Glycyl lysine isopeptide (Lys-Gly) (interchain with G-Cter in SUMO2); alternate). Lys870 participates in a covalent cross-link: Glycyl lysine isopeptide (Lys-Gly) (interchain with G-Cter in ubiquitin); alternate. A Glycyl lysine isopeptide (Lys-Gly) (interchain with G-Cter in SUMO2) cross-link involves residue Lys883. At Ser964 the chain carries Phosphoserine. Lys1085 and Lys1097 each carry N6-acetyllysine.

It belongs to the peptidase C19 family. As to quaternary structure, monomer. Homodimer. Part of a complex with DAXX, MDM2, RASSF1 and USP7. Part of a complex with DAXX, MDM2 and USP7. Interacts with MDM2; the interaction is independent of p53/TP53. Interacts with DAXX; the interaction is direct and independent of MDM2 and p53/TP53. Component of a complex composed of KMT2E, OGT and USP7; the complex stabilizes KMT2E, preventing KMT2E ubiquitination and proteasomal-mediated degradation. Interacts (via MATH domain) with KMT2E. Interacts with OGT. Interacts with FOXO4; the interaction is enhanced in presence of hydrogen peroxide and occurs independently of p53/TP53. Interacts with p53/TP53; the interaction is enhanced in response to DNA damage; the interaction is impaired by TSPYL5. Interacts with PTEN; the interaction is direct. Interacts with ATXN1 and the strength of interaction is influenced by the length of the poly-Gln region in ATXN1. A weaker interaction seen with mutants having longer poly-Gln regions. Interacts with KIAA1530/UVSSA. Interacts with MEX3C and antagonizes its ability to degrade mRNA. Interacts with DNMT1 and UHRF1. Interacts with FOXP3. Interacts (via MATH domain) with RNF220. Associated component of the Polycomb group (PcG) multiprotein PRC1-like complex. Interacts with EPOP. Interacts with OTUD4 and USP9X; the interaction is direct. Interacts with CRY2. Interacts with REST. Interacts with ERCC6. Part of a complex consisting of USP7, MAGEL2 and TRIM27; directly interacts with MAGEL2; directly interacts with TRIM27. In terms of processing, polyneddylated. Not sumoylated. Post-translationally, polyubiquitinated. Ubiquitinated at Lys-870. As to expression, widely expressed. High expression is detected in brain, bone marrow, thymus and testis.

Its subcellular location is the nucleus. It is found in the cytoplasm. The protein resides in the PML body. The protein localises to the chromosome. It catalyses the reaction Thiol-dependent hydrolysis of ester, thioester, amide, peptide and isopeptide bonds formed by the C-terminal Gly of ubiquitin (a 76-residue protein attached to proteins as an intracellular targeting signal).. Hydrolase that deubiquitinates target proteins such as ARMC5, FOXO4, DEPTOR, KAT5, p53/TP53, MDM2, ERCC6, DNMT1, UHRF1, PTEN, KMT2E/MLL5 and DAXX. Together with DAXX, prevents MDM2 self-ubiquitination and enhances the E3 ligase activity of MDM2 towards p53/TP53, thereby promoting p53/TP53 ubiquitination and proteasomal degradation. Deubiquitinates p53/TP53, preventing degradation of p53/TP53, and enhances p53/TP53-dependent transcription regulation, cell growth repression and apoptosis. Deubiquitinates p53/TP53 and MDM2 and strongly stabilizes p53/TP53 even in the presence of excess MDM2, and also induces p53/TP53-dependent cell growth repression and apoptosis. Deubiquitination of FOXO4 in presence of hydrogen peroxide is not dependent on p53/TP53 and inhibits FOXO4-induced transcriptional activity. In association with DAXX, is involved in the deubiquitination and translocation of PTEN from the nucleus to the cytoplasm, both processes that are counteracted by PML. Deubiquitinates KMT2E preventing KMT2E proteasomal-mediated degradation. Involved in cell proliferation during early embryonic development. Involved in transcription-coupled nucleotide excision repair (TC-NER) in response to UV damage: recruited to DNA damage sites following interaction with KIAA1530/UVSSA and promotes deubiquitination of ERCC6, preventing UV-induced degradation of ERCC6. Involved in maintenance of DNA methylation via its interaction with UHRF1 and DNMT1: acts by mediating deubiquitination of UHRF1 and DNMT1, preventing their degradation and promoting DNA methylation by DNMT1. Deubiquitinates alkylation repair enzyme ALKBH3. OTUD4 recruits USP7 and USP9X to stabilize ALKBH3, thereby promoting the repair of alkylated DNA lesions. Acts as a chromatin regulator via its association with the Polycomb group (PcG) multiprotein PRC1-like complex; may act by deubiquitinating components of the PRC1-like complex. Able to mediate deubiquitination of histone H2B; it is however unsure whether this activity takes place in vivo. Exhibits a preference towards 'Lys-48'-linked ubiquitin chains. Increases regulatory T-cells (Treg) suppressive capacity by deubiquitinating and stabilizing the transcription factor FOXP3 which is crucial for Treg cell function. Plays a role in the maintenance of the circadian clock periodicity via deubiquitination and stabilization of the CRY1 and CRY2 proteins. Deubiquitinates REST, thereby stabilizing REST and promoting the maintenance of neural progenitor cells. Deubiquitinates SIRT7, inhibiting SIRT7 histone deacetylase activity and regulating gluconeogenesis. Involved in the regulation of WASH-dependent actin polymerization at the surface of endosomes and the regulation of endosomal protein recycling. It maintains optimal WASH complex activity and precise F-actin levels via deubiquitination of TRIM27 and WASHC1. Mediates the deubiquitination of phosphorylated DEPTOR, promoting its stability and leading to decreased mTORC1 signaling. The sequence is that of Ubiquitin carboxyl-terminal hydrolase 7 (Usp7) from Mus musculus (Mouse).